The primary structure comprises 113 residues: Nucleoid-associated protein Synpcc7942_0464 (113 aa).

It belongs to the YbaB/EbfC family. As to quaternary structure, homodimer.

Its subcellular location is the cytoplasm. The protein localises to the nucleoid. Its function is as follows. Binds to DNA and alters its conformation. May be involved in regulation of gene expression, nucleoid organization and DNA protection. The protein is Nucleoid-associated protein Synpcc7942_0464 of Synechococcus elongatus (strain ATCC 33912 / PCC 7942 / FACHB-805) (Anacystis nidulans R2).